Reading from the N-terminus, the 204-residue chain is Phosphopantothenoylcysteine decarboxylase (204 aa).

FMN is bound by residues Phe-59 and 104-107; that span reads DANT. Substrate is bound at residue Asn-140. Cys-173 serves as the catalytic Proton donor.

It belongs to the HFCD (homooligomeric flavin containing Cys decarboxylase) superfamily. In terms of assembly, homotrimer. FMN is required as a cofactor.

The catalysed reaction is N-[(R)-4-phosphopantothenoyl]-L-cysteine + H(+) = (R)-4'-phosphopantetheine + CO2. It functions in the pathway cofactor biosynthesis; coenzyme A biosynthesis; CoA from (R)-pantothenate: step 3/5. Its function is as follows. Catalyzes the decarboxylation of the cysteine moiety of 4-phosphopantothenoylcysteine to form 4'-phosphopantotheine and this reaction forms part of the biosynthesis of coenzyme A. This chain is Phosphopantothenoylcysteine decarboxylase (PPCDC), found in Homo sapiens (Human).